A 311-amino-acid chain; its full sequence is 4-diphosphocytidyl-2-C-methyl-D-erythritol kinase (311 aa).

Lys-10 is a catalytic residue. 105 to 115 (PVAGGMAGGSA) lines the ATP pocket. Residue Asp-146 is part of the active site.

The protein belongs to the GHMP kinase family. IspE subfamily.

It catalyses the reaction 4-CDP-2-C-methyl-D-erythritol + ATP = 4-CDP-2-C-methyl-D-erythritol 2-phosphate + ADP + H(+). It participates in isoprenoid biosynthesis; isopentenyl diphosphate biosynthesis via DXP pathway; isopentenyl diphosphate from 1-deoxy-D-xylulose 5-phosphate: step 3/6. Functionally, catalyzes the phosphorylation of the position 2 hydroxy group of 4-diphosphocytidyl-2C-methyl-D-erythritol. This Corynebacterium glutamicum (strain ATCC 13032 / DSM 20300 / JCM 1318 / BCRC 11384 / CCUG 27702 / LMG 3730 / NBRC 12168 / NCIMB 10025 / NRRL B-2784 / 534) protein is 4-diphosphocytidyl-2-C-methyl-D-erythritol kinase.